The chain runs to 366 residues: Transcription factor MYB61 (366 aa).

HTH myb-type domains lie at 9–61 (KQKL…INYL) and 62–116 (RPDL…KKKL). 2 DNA-binding regions (H-T-H motif) span residues 37–61 (WSSV…INYL) and 89–112 (WSQI…NSSI). A disordered region spans residues 115-164 (KLKQRGIDPNTHKPISEVESFSDKDKPTTSNNKRSGNDHKSPSSSSATNQ). Positions 124–141 (NTHKPISEVESFSDKDKP) are enriched in basic and acidic residues.

Expressed specifically in guard cells. Expressed in sink tissues, such as xylem, roots and developing seeds.

Its subcellular location is the nucleus. Functionally, transcription factor that coordinates a small network of downstream target genes required for several aspects of plant growth and development, such as xylem formation and xylem cell differentiation, and lateral root formation. Regulates a specific set of target genes by binding DNA to the AC cis-element 5'-ACCTAC-3'. Functions as a transcriptional regulator of stomatal closure. Plays a role the regulation of stomatal pore size independently of abscisic acid (ABA). Required for seed coat mucilage deposition during the development of the seed coat epidermis. Involved in the induction of trichome initiation and branching by positively regulating GL1 and GL2. Required for gibberellin (GA) biosynthesis and degradation by positively affecting the expression of the enzymes that convert GA9 into the bioactive GA4, as well as the enzymes involved in the degradation of GA4. The polypeptide is Transcription factor MYB61 (Arabidopsis thaliana (Mouse-ear cress)).